A 419-amino-acid polypeptide reads, in one-letter code: Serine/threonine-protein kinase Kist (419 aa).

Positions 23–303 (WQVQSRLGSG…PAEMALCSPF (281 aa)) constitute a Protein kinase domain. ATP-binding positions include 29 to 37 (LGSGSSASV) and Lys54. Asp158 functions as the Proton acceptor in the catalytic mechanism. In terms of domain architecture, RRM spans 323-405 (LRLLNVLDDD…GKFVVATFYP (83 aa)).

It belongs to the protein kinase superfamily. Ser/Thr protein kinase family. Interacts with PAM and CDKN1B/p27Kip1. Interacts with stathmin.

Its subcellular location is the nucleus. The enzyme catalyses L-seryl-[protein] + ATP = O-phospho-L-seryl-[protein] + ADP + H(+). The catalysed reaction is L-threonyl-[protein] + ATP = O-phospho-L-threonyl-[protein] + ADP + H(+). In terms of biological role, upon serum stimulation, phosphorylates CDKN1B/p27Kip1, thus controlling CDKN1B subcellular location and cell cycle progression in G1 phase. May be involved in trafficking and/or processing of RNA. The protein is Serine/threonine-protein kinase Kist (Uhmk1) of Mus musculus (Mouse).